The primary structure comprises 744 residues: CCR4-NOT transcription complex subunit 10 (744 aa).

The segment covering 1–16 (MAADKPADQGAEKHEG) has biased composition (basic and acidic residues). Disordered stretches follow at residues 1 to 26 (MAAD…VTDQ), 183 to 204 (SGNK…SNPK), 475 to 522 (EQQD…PSSP), and 602 to 632 (VSLG…RAPQ). Position 2 is an N-acetylalanine (Ala2). Residues 183-200 (SGNKNGKSETGNNSSKDG) show a composition bias toward polar residues. Low complexity predominate over residues 496–506 (ESSESSETCSS). Residues 602–612 (VSLGISSNEQD) show a composition bias toward polar residues.

This sequence belongs to the CNOT10 family. In terms of assembly, component of the CCR4-NOT complex; distinct complexes seem to exist that differ in the participation of probably mutually exclusive catalytic subunits. CNOT10 and CNOT11 form a subcomplex docked to the CNOT1 scaffold.

It localises to the cytoplasm. The protein localises to the nucleus. Functionally, component of the CCR4-NOT complex which is one of the major cellular mRNA deadenylases and is linked to various cellular processes including bulk mRNA degradation, miRNA-mediated repression, translational repression during translational initiation and general transcription regulation. Additional complex functions may be a consequence of its influence on mRNA expression. Is not required for association of CNOT7 to the CCR4-NOT complex. The chain is CCR4-NOT transcription complex subunit 10 (Cnot10) from Rattus norvegicus (Rat).